A 420-amino-acid chain; its full sequence is Protein-lysine N-trimethyltransferase SMYD5 (420 aa).

Residues 29–358 (AEARFISSAK…AGEEICISYL (330 aa)) enclose the SET domain. The MYND-type zinc-finger motif lies at 104 to 142 (PEQCSIRKDLHQQCPRCQVTYCSAECRQAALEQYHQVLC). An S-adenosyl-L-methionine-binding site is contributed by Y357. The segment at 392-420 (DDPDVTSDEEEEAEGETDDAELEDEMTDV) is disordered.

Belongs to the class V-like SAM-binding methyltransferase superfamily.

The protein resides in the cytoplasm. The enzyme catalyses L-lysyl-[protein] + 3 S-adenosyl-L-methionine = N(6),N(6),N(6)-trimethyl-L-lysyl-[protein] + 3 S-adenosyl-L-homocysteine + 3 H(+). The catalysed reaction is L-lysyl(20)-[histone H4] + 3 S-adenosyl-L-methionine = N(6),N(6),N(6)-trimethyl-L-lysyl(20)-[histone H4] + 3 S-adenosyl-L-homocysteine + 3 H(+). It carries out the reaction L-lysyl(36)-[histone H3] + 3 S-adenosyl-L-methionine = N(6),N(6),N(6)-trimethyl-L-lysyl(36)-[histone H3] + 3 S-adenosyl-L-homocysteine + 3 H(+). Its function is as follows. Protein-lysine N-trimethyltransferase that specifically catalyzes trimethylation of 'Lys-22' of the RPL40/eL40 subunit of the 60S ribosome, thereby promoting translation elongation and protein synthesis. May also act as a histone methyltransferase in the context of histone octamers, but not on nucleosome substrates: trimethylates 'Lys-36' of histone H3 and 'Lys-20' of histone H4 to form H3K36me3 and H4K20me3, respectively. The histone methyltransferase activity, which is independent of its SET domain, is however unsure in vivo. This chain is Protein-lysine N-trimethyltransferase SMYD5 (SMYD5), found in Gallus gallus (Chicken).